Here is a 506-residue protein sequence, read N- to C-terminus: MTILCWLALLSTLTAVNAANILAVFPTPAYSHHIVYKVYIEALAEKCHNVTVVKPKLFAYSTKTYCGNITEINADMSVEQYKKLVANSAMFRKRGVVSDTDTVTAANYLGLIEMFKDQFDNINVRNLIANNQTFDLVVVEAFADYALVFGHLYDPAPVIQIAPGYGLAENFDTVGAVARHPVHHPNIWRSNFDDTEANVMTEMRLYKEFKILANMSNALLKQQFGPNTPTIEKLRNKVQLLLLNLHPIFDNNRPVPPSVQYLGGGIHLVKSAPLTKLSPVINAQMNKSKSGTIYVSFGSSIDTKSFANEFLYMLINTFKTLDNYTILWKIDDEVVKNITLPANVITQNWFNQRAVLRHKKMAAFITQGGLQSSDEALEAGIPMVCLPMMGDQFYHAHKLQQLGVARALDTVTVSSDQLLVAINDVLFNAPTYKKHMAELYALINHDKATFPPLDKAIKFTERVIRYRHDISRQLYSLKTTAANVPYSNYYMYKSVFSIVMNHLTHF.

An N-terminal signal peptide occupies residues Met1 to Ala18.

It belongs to the UDP-glycosyltransferase family. Post-translationally, glycosylated.

Functionally, catalyzes the transfer of glucose from UDP-glucose to ecdysteroids which are insect molting hormones. Acts on the host at the organismal level to block its development, thereby increasing the yield of progeny virus. In Lepidoptera (butterflies and moths), this protein is Ecdysteroid UDP-glucosyltransferase (EGT).